A 351-amino-acid polypeptide reads, in one-letter code: Mediator of RNA polymerase II transcription subunit 4 (351 aa).

Positions 30-68 (QKLAEELLAAEAELSKSLKLLETHQNNNARLQQLRQETS) form a coiled coil. 2 disordered regions span residues 156-217 (TQTQ…PAHL) and 256-351 (PRGY…DEDD). The segment covering 163 to 177 (NSFNLSFNGTVSTPI) has biased composition (polar residues). Low complexity predominate over residues 182-198 (PTPTTTNDTQPSTQLPP). Residues 257-308 (RGYDPAEQERRRVAEEKARREAEERARLEREEAERKGREERERMAREREAAR) show a composition bias toward basic and acidic residues. Positions 262 to 311 (AEQERRRVAEEKARREAEERARLEREEAERKGREERERMAREREAARLRN) form a coiled coil. Residues 340-351 (ADDDEDDEDEDD) show a composition bias toward acidic residues.

This sequence belongs to the Mediator complex subunit 4 family. In terms of assembly, component of the Mediator complex.

It localises to the nucleus. Component of the Mediator complex, a coactivator involved in the regulated transcription of nearly all RNA polymerase II-dependent genes. Mediator functions as a bridge to convey information from gene-specific regulatory proteins to the basal RNA polymerase II transcription machinery. Mediator is recruited to promoters by direct interactions with regulatory proteins and serves as a scaffold for the assembly of a functional preinitiation complex with RNA polymerase II and the general transcription factors. This Chaetomium globosum (strain ATCC 6205 / CBS 148.51 / DSM 1962 / NBRC 6347 / NRRL 1970) (Soil fungus) protein is Mediator of RNA polymerase II transcription subunit 4 (MED4).